The sequence spans 130 residues: Small ribosomal subunit protein uS9 (130 aa).

This sequence belongs to the universal ribosomal protein uS9 family.

In Agathobacter rectalis (strain ATCC 33656 / DSM 3377 / JCM 17463 / KCTC 5835 / VPI 0990) (Eubacterium rectale), this protein is Small ribosomal subunit protein uS9.